The following is a 107-amino-acid chain: Large ribosomal subunit protein bL21 (107 aa).

This sequence belongs to the bacterial ribosomal protein bL21 family. Part of the 50S ribosomal subunit. Contacts protein L20.

This protein binds to 23S rRNA in the presence of protein L20. The sequence is that of Large ribosomal subunit protein bL21 from Chlamydia trachomatis serovar L2 (strain ATCC VR-902B / DSM 19102 / 434/Bu).